We begin with the raw amino-acid sequence, 1368 residues long: DNA-directed RNA polymerase subunit beta (1368 aa).

The protein belongs to the RNA polymerase beta chain family. In terms of assembly, the RNAP catalytic core consists of 2 alpha, 1 beta, 1 beta' and 1 omega subunit. When a sigma factor is associated with the core the holoenzyme is formed, which can initiate transcription.

It catalyses the reaction RNA(n) + a ribonucleoside 5'-triphosphate = RNA(n+1) + diphosphate. Functionally, DNA-dependent RNA polymerase catalyzes the transcription of DNA into RNA using the four ribonucleoside triphosphates as substrates. The sequence is that of DNA-directed RNA polymerase subunit beta from Burkholderia cenocepacia (strain ATCC BAA-245 / DSM 16553 / LMG 16656 / NCTC 13227 / J2315 / CF5610) (Burkholderia cepacia (strain J2315)).